A 403-amino-acid chain; its full sequence is Lipid droplet-regulating VLDL assembly factor AUP1 (403 aa).

The Cytoplasmic segment spans residues 1–21 (MEQPSVESLLELRRFPRKQLS). An intramembrane segment occupies 22 to 42 (LILLLLYSPLGLCLFLIRLFI). Over 43–399 (GAHVFLVSCV…GSVGREEEEK (357 aa)) the chain is Cytoplasmic. Residues 286–328 (TQMQMAQHVKEVLPQVPLSAIHRDLGHTGCIDTTITNFLEGRV) enclose the CUE domain.

It belongs to the AUP1 family.

Its subcellular location is the endoplasmic reticulum membrane. It is found in the lipid droplet. Its function is as follows. Plays a role in the translocation of terminally misfolded proteins from the endoplasmic reticulum lumen to the cytoplasm and their degradation by the proteasome. Plays a role in lipid droplet formation. Induces lipid droplet clustering. This Xenopus tropicalis (Western clawed frog) protein is Lipid droplet-regulating VLDL assembly factor AUP1.